A 633-amino-acid chain; its full sequence is Extracellular metalloproteinase mep (633 aa).

A signal peptide spans 1–18; sequence MRLLSLAGAMALPLCVLA. The propeptide occupies 19–244; the sequence is HPTHRTRGIA…IHGVVDYISD (226 aa). A glycan (N-linked (GlcNAc...) asparagine) is linked at N326. Zn(2+) is bound at residue H428. E429 is an active-site residue. H432 lines the Zn(2+) pocket. N514 carries an N-linked (GlcNAc...) asparagine glycan.

This sequence belongs to the peptidase M36 family. Zn(2+) serves as cofactor.

The protein resides in the secreted. In terms of biological role, secreted metalloproteinase that allows assimilation of proteinaceous substrates. The sequence is that of Extracellular metalloproteinase mep (mep) from Aspergillus terreus (strain NIH 2624 / FGSC A1156).